Reading from the N-terminus, the 589-residue chain is Netrin-G2 (589 aa).

The first 17 residues, 1-17, serve as a signal peptide directing secretion; sequence MLRLLALFLHCLPLVSG. Disulfide bonds link Cys-22-Cys-39, Cys-61-Cys-81, and Cys-69-Cys-77. The region spanning 35–286 is the Laminin N-terminal domain; that stretch reads EFYACQPKVM…AISNIEVIGR (252 aa). Positions 69 to 88 are NGL discriminant loop I; the sequence is CSHENPYLCSNECDASNPDL. Residues Asn-122 and Asn-128 are each glycosylated (N-linked (GlcNAc...) asparagine). A disulfide bridge links Cys-171 with Cys-195. Residues 201–203 are NGL discriminant loop II; that stretch reads RWA. The tract at residues 264–267 is NGL discriminant loop III; it reads TYVQ. Intrachain disulfides connect Cys-287–Cys-296, Cys-289–Cys-305, Cys-307–Cys-316, Cys-319–Cys-344, Cys-413–Cys-422, Cys-415–Cys-433, Cys-436–Cys-445, Cys-448–Cys-466, Cys-469–Cys-481, Cys-471–Cys-487, Cys-489–Cys-498, Cys-501–Cys-511, Cys-516–Cys-529, Cys-523–Cys-535, and Cys-537–Cys-546. Laminin EGF-like domains are found at residues 287 to 346, 413 to 468, and 469 to 513; these read CKCN…ACAA, CECY…VCIE, and CNCN…GCYP. N-linked (GlcNAc...) asparagine glycosylation is present at Asn-310. N-linked (GlcNAc...) asparagine glycosylation occurs at Asn-455. Asn-482 is a glycosylation site (N-linked (GlcNAc...) asparagine). The GPI-anchor amidated glycine moiety is linked to residue Gly-566. Residues 567–589 constitute a propeptide, removed in mature form; sequence IVPRPDTLLGCLLLLGLAARLAC.

Interacts with LRRC4. N-glycosylated. As to expression, expression is restricted primarily to neurons of the CNS, particularly in the cerebral cortex, habenular nucleus and superior colliculus. Low levels in lung, kidney, heart and spleen.

It localises to the cell membrane. Functionally, involved in controlling patterning and neuronal circuit formation at the laminar, cellular, subcellular and synaptic levels. Promotes neurite outgrowth of both axons and dendrites. This Mus musculus (Mouse) protein is Netrin-G2 (Ntng2).